The sequence spans 138 residues: High mobility group B protein 4 (138 aa).

2 disordered regions span residues 1–41 (MKGG…PPSA) and 105–138 (LKLASGTNREEDDSDKSKSEVDEAVSEEEAEDDD). Residues 18-29 (KTRGRKAGKKTK) show a composition bias toward basic residues. The segment at residues 35–104 (PKRPPSAFFV…EYIKNVQQYN (70 aa)) is a DNA-binding region (HMG box). Serine 123 and serine 130 each carry phosphoserine. The segment covering 126-138 (DEAVSEEEAEDDD) has biased composition (acidic residues).

It belongs to the HMGB family. As to expression, mostly expressed roots and flowers, and, to a lower extent, in stems and leaves.

The protein localises to the nucleus. It is found in the cytoplasm. Its subcellular location is the cytosol. In terms of biological role, binds preferentially double-stranded DNA. This chain is High mobility group B protein 4 (HMGB4), found in Arabidopsis thaliana (Mouse-ear cress).